A 377-amino-acid chain; its full sequence is MSRGIIIIGSGFAARQLVKNIRKQDAHVPLTLIAADSMDEYNKPDLSHVISQSQRADDLTRQLAGEFAEQFNLRRFPHTWVADIDADAHVVKSQDKQWQYDKLVLATGATAFVPPIAGRELMLTLNSQQEYRACETQLRDAQRVLIVGGGLIGSELAMDFCRAGKTVTLMDNAASLLASLMPPEVSSRLQHHLTDMGVHLLLKSQLQKLEKTEAGIRATLVSQHSIEVDAVIAATGLRPETALARRAGVAVNRGVCVDSYLQTSHPDIYAIGDCAEINGQVLPFLQPIQLSAMYLAKNLLGGNAPLKLPAMLVKVKTPELPLHLAGETQRRDLSWHITAESDGMIAKGMSGEGQLRAFVVSEDRMKEAFALLKTLSV.

The protein belongs to the FAD-dependent oxidoreductase family. FAD is required as a cofactor.

It is found in the cytoplasm. It catalyses the reaction 2 reduced [nitric oxide reductase rubredoxin domain] + NAD(+) + H(+) = 2 oxidized [nitric oxide reductase rubredoxin domain] + NADH. It functions in the pathway nitrogen metabolism; nitric oxide reduction. Its function is as follows. One of at least two accessory proteins for anaerobic nitric oxide (NO) reductase. Reduces the rubredoxin moiety of NO reductase. In Salmonella typhimurium (strain LT2 / SGSC1412 / ATCC 700720), this protein is Nitric oxide reductase FlRd-NAD(+) reductase.